Reading from the N-terminus, the 239-residue chain is Putative 3-methyladenine DNA glycosylase (239 aa).

Belongs to the DNA glycosylase MPG family.

The chain is Putative 3-methyladenine DNA glycosylase from Pseudomonas aeruginosa (strain ATCC 15692 / DSM 22644 / CIP 104116 / JCM 14847 / LMG 12228 / 1C / PRS 101 / PAO1).